Here is a 624-residue protein sequence, read N- to C-terminus: UvrABC system protein C (624 aa).

The GIY-YIG domain occupies Leu27–Ile105. One can recognise a UVR domain in the interval Arg215–Ile250.

It belongs to the UvrC family. As to quaternary structure, interacts with UvrB in an incision complex.

The protein resides in the cytoplasm. The UvrABC repair system catalyzes the recognition and processing of DNA lesions. UvrC both incises the 5' and 3' sides of the lesion. The N-terminal half is responsible for the 3' incision and the C-terminal half is responsible for the 5' incision. This is UvrABC system protein C from Paramagnetospirillum magneticum (strain ATCC 700264 / AMB-1) (Magnetospirillum magneticum).